The following is a 223-amino-acid chain: UPF0502 protein Sbal_1765 (223 aa).

The protein belongs to the UPF0502 family.

The protein is UPF0502 protein Sbal_1765 of Shewanella baltica (strain OS155 / ATCC BAA-1091).